The primary structure comprises 438 residues: V-type ATP synthase beta chain (438 aa).

It belongs to the ATPase alpha/beta chains family.

Functionally, produces ATP from ADP in the presence of a proton gradient across the membrane. The V-type beta chain is a regulatory subunit. In Chlamydia muridarum (strain MoPn / Nigg), this protein is V-type ATP synthase beta chain (atpB).